Here is a 767-residue protein sequence, read N- to C-terminus: DNA topoisomerase 1 (767 aa).

A compositionally biased stretch (basic and acidic residues) spans Met1 to Lys23. Residues Met1 to Glu201 are disordered. Residue Ser2 is modified to N-acetylserine. Phosphoserine is present on residues Ser2 and Ser10. Positions His24–Lys39 are enriched in basic residues. A compositionally biased stretch (basic and acidic residues) spans Lys40–Asn110. A Phosphoserine modification is found at Ser59. Lys103 is covalently cross-linked (Glycyl lysine isopeptide (Lys-Gly) (interchain with G-Cter in SUMO2)). Residue Lys105 forms a Glycyl lysine isopeptide (Lys-Gly) (interchain with G-Cter in SUMO); alternate linkage. A Glycyl lysine isopeptide (Lys-Gly) (interchain with G-Cter in SUMO2); alternate cross-link involves residue Lys105. A Phosphoserine modification is found at Ser114. Residue Lys119 forms a Glycyl lysine isopeptide (Lys-Gly) (interchain with G-Cter in SUMO); alternate linkage. A Glycyl lysine isopeptide (Lys-Gly) (interchain with G-Cter in SUMO2); alternate cross-link involves residue Lys119. A Glycyl lysine isopeptide (Lys-Gly) (interchain with G-Cter in SUMO1); alternate cross-link involves residue Lys119. A compositionally biased stretch (basic and acidic residues) spans Pro131–Glu168. Residues Lys136 and Lys150 each participate in a glycyl lysine isopeptide (Lys-Gly) (interchain with G-Cter in SUMO2) cross-link. Residue Lys155 forms a Glycyl lysine isopeptide (Lys-Gly) (interchain with G-Cter in SUMO); alternate linkage. Lys155 participates in a covalent cross-link: Glycyl lysine isopeptide (Lys-Gly) (interchain with G-Cter in SUMO2); alternate. Glycyl lysine isopeptide (Lys-Gly) (interchain with G-Cter in SUMO2) cross-links involve residues Lys160 and Lys166. Lys174 is covalently cross-linked (Glycyl lysine isopeptide (Lys-Gly) (interchain with G-Cter in SUMO2); alternate). Lys174 carries the post-translational modification N6-acetyllysine; alternate. Basic and acidic residues predominate over residues Lys181 to Glu201. A Glycyl lysine isopeptide (Lys-Gly) (interchain with G-Cter in SUMO2) cross-link involves residue Lys206. At Lys282 the chain carries N6-acetyllysine. Lys338 participates in a covalent cross-link: Glycyl lysine isopeptide (Lys-Gly) (interchain with G-Cter in SUMO2). Interaction with DNA stretches follow at residues Lys427–Tyr428 and Arg490–Lys495. Residues Ser434–Phe767 form the Topo IB-type catalytic domain. The residue at position 508 (Ser508) is a Phosphoserine; by CK2. Residue Lys551 forms a Glycyl lysine isopeptide (Lys-Gly) (interchain with G-Cter in SUMO2) linkage. The interaction with DNA stretch occupies residues Thr587–Lys589. Glycyl lysine isopeptide (Lys-Gly) (interchain with G-Cter in SUMO2) cross-links involve residues Lys644, Lys702, and Lys714. The O-(3'-phospho-DNA)-tyrosine intermediate role is filled by Tyr725.

Belongs to the type IB topoisomerase family. In terms of assembly, monomer. Interacts with ERCC6. Interacts with TPRN; TPRN interacts with a number of DNA damage response proteins, is recruited to sites of DNA damage and may play a role in DNA damage repair. Sumoylated. Lys-119 is the main site of sumoylation. Sumoylation plays a role in partitioning TOP1 between nucleoli and nucleoplasm. Levels are dramatically increased on camptothecin (CPT) treatment. Post-translationally, phosphorylation at Ser-508 by CK2 increases binding to supercoiled DNA and sensitivity to camptothecin.

It localises to the nucleus. The protein localises to the nucleolus. The protein resides in the nucleoplasm. It carries out the reaction ATP-independent breakage of single-stranded DNA, followed by passage and rejoining.. In terms of biological role, releases the supercoiling and torsional tension of DNA introduced during the DNA replication and transcription by transiently cleaving and rejoining one strand of the DNA duplex. Introduces a single-strand break via transesterification at a target site in duplex DNA. The scissile phosphodiester is attacked by the catalytic tyrosine of the enzyme, resulting in the formation of a DNA-(3'-phosphotyrosyl)-enzyme intermediate and the expulsion of a 5'-OH DNA strand. The free DNA strand then rotates around the intact phosphodiester bond on the opposing strand, thus removing DNA supercoils. Finally, in the religation step, the DNA 5'-OH attacks the covalent intermediate to expel the active-site tyrosine and restore the DNA phosphodiester backbone. Regulates the alternative splicing of tissue factor (F3) pre-mRNA in endothelial cells. Involved in the circadian transcription of the core circadian clock component BMAL1 by altering the chromatin structure around the ROR response elements (ROREs) on the BMAL1 promoter. This Mus musculus (Mouse) protein is DNA topoisomerase 1 (Top1).